A 148-amino-acid polypeptide reads, in one-letter code: Insoluble matrix shell protein 1 (148 aa).

Positions 105 to 128 (KSGRTEARNTDDSGDPIIDPRTAD) are disordered.

Component of the acid-insoluble organic matrix of the calcified shell.

Its subcellular location is the secreted. This Ruditapes philippinarum (Japanese carpet shell) protein is Insoluble matrix shell protein 1.